A 223-amino-acid polypeptide reads, in one-letter code: Urease accessory protein UreF (223 aa).

The protein belongs to the UreF family. In terms of assembly, ureD, UreF and UreG form a complex that acts as a GTP-hydrolysis-dependent molecular chaperone, activating the urease apoprotein by helping to assemble the nickel containing metallocenter of UreC. The UreE protein probably delivers the nickel.

It is found in the cytoplasm. Its function is as follows. Required for maturation of urease via the functional incorporation of the urease nickel metallocenter. The polypeptide is Urease accessory protein UreF (Sinorhizobium medicae (strain WSM419) (Ensifer medicae)).